We begin with the raw amino-acid sequence, 240 residues long: Proteasome subunit beta type-1 (240 aa).

An N-acetylmethionine modification is found at methionine 1. Positions 1 to 27 (MLSTAAYRDPDRELVMGPQGSAGPVQM) are excised as a propeptide. Serine 57 carries O-linked (GlcNAc) serine glycosylation. Serine 61 and serine 67 each carry phosphoserine. Residue tyrosine 149 is modified to Phosphotyrosine. Serine 161 is modified (phosphoserine). Position 203 is an N6-acetyllysine (lysine 203). O-linked (GlcNAc) serine glycosylation is present at serine 208.

Belongs to the peptidase T1B family. In terms of assembly, the 26S proteasome consists of a 20S proteasome core and two 19S regulatory subunits. The 20S proteasome core is a barrel-shaped complex made of 28 subunits that are arranged in four stacked rings. The two outer rings are each formed by seven alpha subunits, and the two inner rings are formed by seven beta subunits. The proteolytic activity is exerted by three beta-subunits PSMB5, PSMB6 and PSMB7. Interacts with SERPINB2. Interacts with RFPL4A. As to expression, ubiquitous.

It localises to the cytoplasm. Its subcellular location is the nucleus. Functionally, non-catalytic component of the 20S core proteasome complex involved in the proteolytic degradation of most intracellular proteins. This complex plays numerous essential roles within the cell by associating with different regulatory particles. Associated with two 19S regulatory particles, forms the 26S proteasome and thus participates in the ATP-dependent degradation of ubiquitinated proteins. The 26S proteasome plays a key role in the maintenance of protein homeostasis by removing misfolded or damaged proteins that could impair cellular functions, and by removing proteins whose functions are no longer required. Associated with the PA200 or PA28, the 20S proteasome mediates ubiquitin-independent protein degradation. This type of proteolysis is required in several pathways including spermatogenesis (20S-PA200 complex) or generation of a subset of MHC class I-presented antigenic peptides (20S-PA28 complex). This chain is Proteasome subunit beta type-1 (Psmb1), found in Rattus norvegicus (Rat).